A 176-amino-acid chain; its full sequence is Inorganic pyrophosphatase (176 aa).

Residues K31, R45, and Y57 each coordinate substrate. The Mg(2+) site is built by D67, D72, and D104. A substrate-binding site is contributed by Y142.

Belongs to the PPase family. As to quaternary structure, homohexamer. Mg(2+) serves as cofactor.

It localises to the cytoplasm. It carries out the reaction diphosphate + H2O = 2 phosphate + H(+). Its function is as follows. Catalyzes the hydrolysis of inorganic pyrophosphate (PPi) forming two phosphate ions. The protein is Inorganic pyrophosphatase of Haemophilus influenzae (strain ATCC 51907 / DSM 11121 / KW20 / Rd).